The chain runs to 332 residues: MKVAVLGAGAWGTALAGHLAARHDTLLWARDAALIAGLQARHENSRYLEGIALPDALRYDADLDAALAHGAADDALCVIGAPVAGLRTLLRAMRDARCVPAHVVWVCKGFEADTHLLPHQVIAAELPEQRSNGVLSGPSFAREVGLGLPVALTVASASAACRERTLAAFHHGAMRIYTGDDVVGVEVGGAVKNVLAIATGIADGLGLGLNARAALITRGLAEMSRLGVALGGRAETFTGLTGLGDLILTATGDLSRNRTVGLQLASGRSLADILGALGHVAEGVRCAQAVLALAHAHAIEMPITEAVCGVLFDGVAPRDAVSGLLRRDARAE.

Trp11, Arg30, and Lys108 together coordinate NADPH. Sn-glycerol 3-phosphate-binding residues include Lys108, Gly137, and Ser139. Ala141 provides a ligand contact to NADPH. The sn-glycerol 3-phosphate site is built by Lys192, Asp245, Ser255, Arg256, and Asn257. Catalysis depends on Lys192, which acts as the Proton acceptor. Arg256 contributes to the NADPH binding site. Residues Val280 and Glu282 each coordinate NADPH.

It belongs to the NAD-dependent glycerol-3-phosphate dehydrogenase family.

It is found in the cytoplasm. The catalysed reaction is sn-glycerol 3-phosphate + NAD(+) = dihydroxyacetone phosphate + NADH + H(+). It catalyses the reaction sn-glycerol 3-phosphate + NADP(+) = dihydroxyacetone phosphate + NADPH + H(+). It participates in membrane lipid metabolism; glycerophospholipid metabolism. In terms of biological role, catalyzes the reduction of the glycolytic intermediate dihydroxyacetone phosphate (DHAP) to sn-glycerol 3-phosphate (G3P), the key precursor for phospholipid synthesis. The sequence is that of Glycerol-3-phosphate dehydrogenase [NAD(P)+] from Burkholderia vietnamiensis (strain G4 / LMG 22486) (Burkholderia cepacia (strain R1808)).